Reading from the N-terminus, the 772-residue chain is 1,4-alpha-glucan branching enzyme GlgB (772 aa).

Catalysis depends on D431, which acts as the Nucleophile. The Proton donor role is filled by E484.

It belongs to the glycosyl hydrolase 13 family. GlgB subfamily. Monomer.

It carries out the reaction Transfers a segment of a (1-&gt;4)-alpha-D-glucan chain to a primary hydroxy group in a similar glucan chain.. The protein operates within glycan biosynthesis; glycogen biosynthesis. Functionally, catalyzes the formation of the alpha-1,6-glucosidic linkages in glycogen by scission of a 1,4-alpha-linked oligosaccharide from growing alpha-1,4-glucan chains and the subsequent attachment of the oligosaccharide to the alpha-1,6 position. This is 1,4-alpha-glucan branching enzyme GlgB from Synechococcus sp. (strain RCC307).